Here is a 412-residue protein sequence, read N- to C-terminus: Squamosa promoter-binding-like protein 2 (412 aa).

The tract at residues 1–81 (MDWDAKMPSW…AAAAGKRARA (81 aa)) is disordered. The span at 18-31 (PSGGGGGGGGGGGA) shows a compositional bias: gly residues. Composition is skewed to low complexity over residues 48–57 (VSAASAAPAA) and 67–81 (SSSSSAAAAGKRARA). The SBP-type zinc finger occupies 89–167 (VPACSVEGCA…DGHNKRRRKP (79 aa)). 8 residues coordinate Zn(2+): Cys92, Cys97, Cys115, His118, Cys134, Cys137, His141, and Cys153. The Bipartite nuclear localization signal signature appears at 150 to 166 (KRSCRKRLDGHNKRRRK).

In terms of tissue distribution, expressed in stems, leaf sheaths, and young panicles.

It localises to the nucleus. Functionally, trans-acting factor that binds specifically to the consensus nucleotide sequence 5'-TNCGTACAA-3'. May be involved in panicle development. This Oryza sativa subsp. japonica (Rice) protein is Squamosa promoter-binding-like protein 2 (SPL2).